Consider the following 273-residue polypeptide: Testis-specific serine/threonine-protein kinase 6 (273 aa).

The Protein kinase domain maps to 12–267 (YKLGRTIGEG…AGQVARNCWL (256 aa)). ATP-binding positions include 18 to 26 (IGEGSYSKV) and Lys41. The active-site Proton acceptor is Asp135.

This sequence belongs to the protein kinase superfamily. CAMK Ser/Thr protein kinase family. In terms of assembly, microtubule inner protein component of sperm flagellar doublet microtubules. Interacts with HSP90; this interaction stabilizes and activates TSSK6. Interacts with the heat shock proteins HSPCB, HSPA8 and HSPA1A. These interactions appear to be required for TSSK6 kinase activity. Interacts with TSACC; this interaction is direct and recruits TSACC to HSP90, which is essential for kinase activity. Requires Mg(2+) as cofactor. Autophosphorylated. Post-translationally, ubiquitinated; HSP90 activity negatively regulates ubiquitination and degradation. As to expression, highly expressed in testis. Expressed at lower levels in colon, small intestine, ovary, prostate, thymus, spleen and peripheral blood leukocytes.

The protein resides in the cytoplasm. It localises to the cytoskeleton. The protein localises to the flagellum axoneme. It is found in the nucleus. It carries out the reaction L-seryl-[protein] + ATP = O-phospho-L-seryl-[protein] + ADP + H(+). It catalyses the reaction L-threonyl-[protein] + ATP = O-phospho-L-threonyl-[protein] + ADP + H(+). Functionally, serine/threonine-protein kinase component of the sperm flagellar doublet microtubules. May act as a regulator of sperm motility by mediating phosphorylation of sperm doublet microtubule proteins. Plays a role in DNA condensation during postmeiotic chromatin remodeling and histone-to-protamine transition during spermatogenesis. The chain is Testis-specific serine/threonine-protein kinase 6 from Homo sapiens (Human).